The primary structure comprises 349 residues: Terpene cyclase janA (349 aa).

Asparagine 80 carries an N-linked (GlcNAc...) asparagine glycan. The next 6 helical transmembrane spans lie at 81–101 (LSLYGVAFASALVPMWLVIVL), 116–136 (LAFLAGPLVQCLGPGLVIPAI), 155–175 (IGFYPSSMIIGYILPLILAAL), 189–209 (LIAVWQGWPVYTSLIMLIIHY), 223–243 (IACAFAFACSTAGHLAFLWFA), and 308–328 (VILIFGMAGVVFLGPCSVALL).

Belongs to the membrane-bound ascI terpene cyclase family.

It is found in the membrane. It functions in the pathway secondary metabolite biosynthesis. Functionally, part of the gene cluster that mediates the biosynthesis of the indole diterpenes janthitremanes such as shearinine K or shearinine A. The geranylgeranyl diphosphate (GGPP) synthase janG catalyzes the first step in janthitremane biosynthesis via conversion of farnesyl pyrophosphate and isopentyl pyrophosphate into geranylgeranyl pyrophosphate (GGPP). Condensation of indole-3-glycerol phosphate with GGPP by the prenyl transferase janC then forms 3-geranylgeranylindole (3-GGI). Epoxidation by the FAD-dependent monooxygenase janM leads to a epoxidized-GGI that is substrate of the terpene cyclase janB for cyclization to yield paspaline. Paspaline is subsequently converted to 13-desoxypaspaline by the cytochrome P450 monooxygenase janP, via beta-PC-M6 in a series of alpha-face oxidations. The cytochrome P450 monooxygenase janQ is proposed to carry out sequential beta-face oxidation steps at C-7 and C-13 of 13-desoxypaspaline to form paspalicine and paspalinine respectively. The indole diterpene prenyltransferase janD may then convert paspalinine into shearinine K which is substrate of janO and/or additional enzymes for oxidation and cyclization to generate shearinine A. This Penicillium janthinellum (Penicillium vitale) protein is Terpene cyclase janA.